The primary structure comprises 82 residues: Small ribosomal subunit protein bS16 (82 aa).

The protein belongs to the bacterial ribosomal protein bS16 family.

The sequence is that of Small ribosomal subunit protein bS16 from Haemophilus ducreyi (strain 35000HP / ATCC 700724).